Here is a 270-residue protein sequence, read N- to C-terminus: Undecaprenyl-diphosphatase 1 (270 aa).

7 helical membrane-spanning segments follow: residues 5 to 25 (YYIL…PIPI), 42 to 62 (IEGF…VLLI), 89 to 109 (FFFI…GVLF), 117 to 137 (LKGV…LWII), 192 to 212 (FSFL…ITDI), 220 to 240 (TLFV…YISL), and 250 to 270 (GNLK…LIFL).

It belongs to the UppP family.

It localises to the cell membrane. The enzyme catalyses di-trans,octa-cis-undecaprenyl diphosphate + H2O = di-trans,octa-cis-undecaprenyl phosphate + phosphate + H(+). Its function is as follows. Catalyzes the dephosphorylation of undecaprenyl diphosphate (UPP). Confers resistance to bacitracin. The chain is Undecaprenyl-diphosphatase 1 from Bacillus cereus (strain ATCC 10987 / NRS 248).